The chain runs to 311 residues: Homoserine O-acetyltransferase (311 aa).

The active-site Acyl-thioester intermediate is Cys142. Positions 163 and 192 each coordinate substrate. Catalysis depends on His235, which acts as the Proton acceptor. The active site involves Glu237. Residue Arg249 participates in substrate binding.

This sequence belongs to the MetA family.

Its subcellular location is the cytoplasm. It carries out the reaction L-homoserine + acetyl-CoA = O-acetyl-L-homoserine + CoA. The protein operates within amino-acid biosynthesis; L-methionine biosynthesis via de novo pathway; O-acetyl-L-homoserine from L-homoserine: step 1/1. Its function is as follows. Transfers an acetyl group from acetyl-CoA to L-homoserine, forming acetyl-L-homoserine. This chain is Homoserine O-acetyltransferase, found in Lysinibacillus sphaericus (strain C3-41).